Here is a 225-residue protein sequence, read N- to C-terminus: Gene 30 protein (225 aa).

A disordered region spans residues 48 to 73; sequence RNSELGHPEVKKEETTQQPEKGEGMA. A compositionally biased stretch (basic and acidic residues) spans 51-73; that stretch reads ELGHPEVKKEETTQQPEKGEGMA.

Essential for DNA synthesis. This Bacillus phage SP01 (Bacteriophage SP01) protein is Gene 30 protein (30).